The sequence spans 201 residues: Large ribosomal subunit protein uL4 (201 aa).

The tract at residues 45 to 66 (AQKSRAEVVGSNKKPWRQKGTG) is disordered.

Belongs to the universal ribosomal protein uL4 family. In terms of assembly, part of the 50S ribosomal subunit.

One of the primary rRNA binding proteins, this protein initially binds near the 5'-end of the 23S rRNA. It is important during the early stages of 50S assembly. It makes multiple contacts with different domains of the 23S rRNA in the assembled 50S subunit and ribosome. Functionally, forms part of the polypeptide exit tunnel. In Baumannia cicadellinicola subsp. Homalodisca coagulata, this protein is Large ribosomal subunit protein uL4.